A 512-amino-acid polypeptide reads, in one-letter code: cAMP-dependent protein kinase catalytic subunit (512 aa).

Polar residues predominate over residues 1–15 (MDTTAVASKGSTNVG). 2 disordered regions span residues 1–79 (MDTT…SSLW) and 118–166 (IDNL…GLRD). Over residues 16 to 27 (SSTDTLSTSASL) the composition is skewed to low complexity. Polar residues-rich tracts occupy residues 32-52 (NAGS…SFNG) and 62-79 (SDAS…SSLW). Residues 143-166 (SRDGRGELGSEHGERRSAMDGLRD) show a composition bias toward basic and acidic residues. The Protein kinase domain occupies 201-456 (FNFLQTLGTG…SMDIIMHPWF (256 aa)). ATP-binding positions include 207 to 215 (LGTGSFGRV) and K230. D324 (proton acceptor) is an active-site residue. Position 356 is a phosphothreonine (T356). One can recognise an AGC-kinase C-terminal domain in the interval 457–512 (RDISWDKILTRKIEVPYVPPIQAGMGDSSQFDAYADVATDYGTSEDPEFTSIFKDF).

Belongs to the protein kinase superfamily. AGC Ser/Thr protein kinase family. cAMP subfamily.

It catalyses the reaction L-seryl-[protein] + ATP = O-phospho-L-seryl-[protein] + ADP + H(+). The enzyme catalyses L-threonyl-[protein] + ATP = O-phospho-L-threonyl-[protein] + ADP + H(+). With respect to regulation, activated by cAMP. The chain is cAMP-dependent protein kinase catalytic subunit (pka1) from Schizosaccharomyces pombe (strain 972 / ATCC 24843) (Fission yeast).